Here is a 341-residue protein sequence, read N- to C-terminus: MNKSKEAETDITQIFPNLDILPKKFSAKELAERRIKKLHVAPGSIFMNRWSIEGVIGNGGYGQIFMVMDVKKNDERAMKIEPKLRAEVITKRMIMEQQVLMKMQGKTHIPTMYASGFNDQFNFIIMQLLSMNVGDFRKRSPLGRLSKETVGRIAYQTLNALKDIHDMGYVHRDVKPANICFGVHAQNRHILYLLDFGLVRRFKTESGVCIPWRINAGFKGTERYVSVRVHEKLEQTPWDDAFSVLYTAYELVVGELPWRYLEDIHEIHGVKKLMNEVTKNGEMFKDIASILVDFHKMILECDPVVELPYEKLLECLKCLYSPKSLLEPYDWEDGYKTTLNI.

Residues Trp50–Leu326 form the Protein kinase domain. ATP contacts are provided by residues Ile56–Ile64 and Lys79. Asp173 functions as the Proton acceptor in the catalytic mechanism.

It belongs to the protein kinase superfamily. CK1 Ser/Thr protein kinase family. Casein kinase I subfamily.

The catalysed reaction is L-seryl-[protein] + ATP = O-phospho-L-seryl-[protein] + ADP + H(+). It catalyses the reaction L-threonyl-[protein] + ATP = O-phospho-L-threonyl-[protein] + ADP + H(+). The polypeptide is Putative casein kinase I C03C10.2 (Caenorhabditis elegans).